We begin with the raw amino-acid sequence, 378 residues long: Endopolygalacturonase I (378 aa).

The N-terminal stretch at 1–20 (MHLNTTLLVSLALGAASVLA) is a signal peptide. Positions 21–39 (SPAPPAITAPPTAEEIAKR) are excised as a propeptide. A disulfide bridge links Cys-43 with Cys-61. Thr-44 is a glycosylation site (O-linked (Man...) threonine). O-linked (Man...) serine glycans are attached at residues Ser-46, Ser-48, Ser-52, Ser-53, Ser-55, Ser-57, and Ser-62. Thr-63 is a glycosylation site (O-linked (Man...) threonine). A glycan (O-linked (Man...) serine) is linked at Ser-73. PbH1 repeat units lie at residues 174 to 204 (SDYL…DIGT), 205 to 226 (STYV…AVNS), 227 to 247 (GENI…SIGS), 256 to 277 (VKNV…RIKT), and 285 to 307 (VSDV…VVQQ). The active-site Proton donor is the Asp-219. An intrachain disulfide couples Cys-221 to Cys-237. His-241 is a catalytic residue. Asn-258 carries N-linked (GlcNAc...) asparagine glycosylation. 2 disulfides stabilise this stretch: Cys-345-Cys-350 and Cys-369-Cys-378.

The protein belongs to the glycosyl hydrolase 28 family.

Its subcellular location is the secreted. The enzyme catalyses (1,4-alpha-D-galacturonosyl)n+m + H2O = (1,4-alpha-D-galacturonosyl)n + (1,4-alpha-D-galacturonosyl)m.. Functionally, involved in maceration and soft-rotting of plant tissue. Hydrolyzes the 1,4-alpha glycosidic bonds of de-esterified pectate in the smooth region of the plant cell wall. In Aspergillus aculeatus, this protein is Endopolygalacturonase I (pgaI).